The following is a 477-amino-acid chain: MTTSSNPPNSAAPNQTSGMWGGRFSEATDAFVAEFTASVQFDQRFYKQDIAGSIAHATMLAKVGVLTEAERDDIIEGLSTIRAEIEAGTFEWRIDLEDVHMNIESRLTQRIGITGKKLHTGRSRNDQVATDIRLYLRDEIDDILGLLERLQKGLLGLAAKNVNTIMPGFTHLQTAQPVTFGHHLLAWFEMLVRDTERLQDCRKRVNRMPLGSAALAGTTYPIDRAYTAELLGFEAVSENSLDAVSDRDFAIEFNAAASLIMMHLSRMSEELILWTSAQFKFVNIPDRFCTGSSIMPQKKNPDVPELIRGKSGRVFGDLVSLLTLMKGQPLAYNKDNQEDKEPLFDAIDTVRGSLMAFADMIPALVPNVEIMREAALRGFSTATDLADYLVKKGVAFRDAHEIVGKAVALGVAEEKDLSELTLEQLQQFSDLITADVFDKALTLEASVNARDHIGGTSPKQVEAAIARAHKRLEQLYA.

Belongs to the lyase 1 family. Argininosuccinate lyase subfamily.

The protein resides in the cytoplasm. It catalyses the reaction 2-(N(omega)-L-arginino)succinate = fumarate + L-arginine. Its pathway is amino-acid biosynthesis; L-arginine biosynthesis; L-arginine from L-ornithine and carbamoyl phosphate: step 3/3. In Acinetobacter baumannii (strain AB307-0294), this protein is Argininosuccinate lyase.